The sequence spans 92 residues: MVENVIWPAYFDAALSRRDGRRVPMELAVEEPSIDEIATAVQQVGYDAVVERDVAYPRRHWDAAGRVLVKDADDAKNTLVQAVAAYVGALRD.

It belongs to the SRP19 family. As to quaternary structure, part of the signal recognition particle protein translocation system, which is composed of SRP and FtsY. Archaeal SRP consists of a 7S RNA molecule of 300 nucleotides and two protein subunits: SRP54 and SRP19.

The protein resides in the cytoplasm. Involved in targeting and insertion of nascent membrane proteins into the cytoplasmic membrane. Binds directly to 7S RNA and mediates binding of the 54 kDa subunit of the SRP. This chain is Signal recognition particle 19 kDa protein, found in Halobacterium salinarum (strain ATCC 29341 / DSM 671 / R1).